The chain runs to 340 residues: Phosphate acyltransferase (340 aa).

The protein belongs to the PlsX family. As to quaternary structure, homodimer. Probably interacts with PlsY.

The protein resides in the cytoplasm. It carries out the reaction a fatty acyl-[ACP] + phosphate = an acyl phosphate + holo-[ACP]. The protein operates within lipid metabolism; phospholipid metabolism. Its function is as follows. Catalyzes the reversible formation of acyl-phosphate (acyl-PO(4)) from acyl-[acyl-carrier-protein] (acyl-ACP). This enzyme utilizes acyl-ACP as fatty acyl donor, but not acyl-CoA. This Pseudomonas syringae pv. syringae (strain B728a) protein is Phosphate acyltransferase.